The chain runs to 301 residues: uncharacterized protein (301 aa).

The first 25 residues, 1–25 (MKFKNTLSIFKILIILFSFYNVAFS), serve as a signal peptide directing secretion. The Extracellular portion of the chain corresponds to 26–279 (DDTEKYTFKG…STTGSKDSST (254 aa)). The interval 174–281 (LYTGSSNTPN…TGSKDSSTGN (108 aa)) is disordered. Residues Asn191, Asn212, Asn234, and Asn241 are each glycosylated (N-linked (GlcNAc...) asparagine). Positions 204–234 (SSSDSTNSNSSSTDTASSSPSSSPSSSPSPN) are enriched in low complexity. Residues 254 to 281 (GGVETSTAGSSTGTTSSTTGSKDSSTGN) show a composition bias toward low complexity. The chain crosses the membrane as a helical span at residues 280–300 (GNSILPTLIIVTFFVLTLVIM). Ser301 is a topological domain (cytoplasmic).

It is found in the membrane. This is an uncharacterized protein from Dictyostelium discoideum (Social amoeba).